The primary structure comprises 202 residues: MESMNNQEILNGTIEYVSRSSKLLKKVSDITKEKIKDYPYLDDLTEEYIQAQHLYDRTPKLLKLLSEINITDAIISNEVIENINNMKYELDHLIESTQFRIDDIDTYFKRVETEYFLKDKKNEFYVELSSYNSQIQDSLKKLKSIYDGGKLLTKEVSEINRKKFKNSDKVLTKHINTGIALFIILTSLLVYFIQFKPKISQD.

Residues 175–195 (INTGIALFIILTSLLVYFIQF) traverse the membrane as a helical segment.

The protein localises to the membrane. This is an uncharacterized protein from Dictyostelium discoideum (Social amoeba).